We begin with the raw amino-acid sequence, 308 residues long: Mycothiol acetyltransferase (308 aa).

2 consecutive N-acetyltransferase domains span residues 8 to 155 (RDVD…PRLR) and 160 to 308 (VQVR…RRAR). Residue glutamate 39 coordinates 1D-myo-inositol 2-(L-cysteinylamino)-2-deoxy-alpha-D-glucopyranoside. 84–86 (LVV) contacts acetyl-CoA. 1D-myo-inositol 2-(L-cysteinylamino)-2-deoxy-alpha-D-glucopyranoside is bound by residues glutamate 187, lysine 226, and glutamate 240. Acetyl-CoA-binding positions include 244-246 (LGI) and 251-257 (QGLGLGR). Tyrosine 278 is a 1D-myo-inositol 2-(L-cysteinylamino)-2-deoxy-alpha-D-glucopyranoside binding site.

This sequence belongs to the acetyltransferase family. MshD subfamily. As to quaternary structure, monomer.

The catalysed reaction is 1D-myo-inositol 2-(L-cysteinylamino)-2-deoxy-alpha-D-glucopyranoside + acetyl-CoA = mycothiol + CoA + H(+). In terms of biological role, catalyzes the transfer of acetyl from acetyl-CoA to desacetylmycothiol (Cys-GlcN-Ins) to form mycothiol. In Geodermatophilus obscurus (strain ATCC 25078 / DSM 43160 / JCM 3152 / CCUG 61914 / KCC A-0152 / KCTC 9177 / NBRC 13315 / NRRL B-3577 / G-20), this protein is Mycothiol acetyltransferase.